Reading from the N-terminus, the 631-residue chain is Phosphomethylpyrimidine synthase (631 aa).

Substrate contacts are provided by residues N239, M268, Y297, H333, 353 to 355, 394 to 397, and E433; these read SRG and DGLR. H437 is a binding site for Zn(2+). Y460 is a binding site for substrate. H501 is a Zn(2+) binding site. Residues C581, C584, and C589 each coordinate [4Fe-4S] cluster.

Belongs to the ThiC family. Homodimer. [4Fe-4S] cluster serves as cofactor.

The catalysed reaction is 5-amino-1-(5-phospho-beta-D-ribosyl)imidazole + S-adenosyl-L-methionine = 4-amino-2-methyl-5-(phosphooxymethyl)pyrimidine + CO + 5'-deoxyadenosine + formate + L-methionine + 3 H(+). The protein operates within cofactor biosynthesis; thiamine diphosphate biosynthesis. Its function is as follows. Catalyzes the synthesis of the hydroxymethylpyrimidine phosphate (HMP-P) moiety of thiamine from aminoimidazole ribotide (AIR) in a radical S-adenosyl-L-methionine (SAM)-dependent reaction. The sequence is that of Phosphomethylpyrimidine synthase from Escherichia coli O6:K15:H31 (strain 536 / UPEC).